Consider the following 309-residue polypeptide: Thiamine-monophosphate kinase (309 aa).

Asp-41 and Asp-55 together coordinate Mg(2+). His-62 contributes to the substrate binding site. Asp-83, Asp-128, and Asp-215 together coordinate Mg(2+). Residue 127–128 (GD) participates in ATP binding. Position 217 (Ser-217) interacts with ATP. Asp-218 lines the Mg(2+) pocket. Residue Glu-268 coordinates substrate.

This sequence belongs to the thiamine-monophosphate kinase family.

It catalyses the reaction thiamine phosphate + ATP = thiamine diphosphate + ADP. It participates in cofactor biosynthesis; thiamine diphosphate biosynthesis; thiamine diphosphate from thiamine phosphate: step 1/1. Functionally, catalyzes the ATP-dependent phosphorylation of thiamine-monophosphate (TMP) to form thiamine-pyrophosphate (TPP), the active form of vitamin B1. This is Thiamine-monophosphate kinase from Methanopyrus kandleri (strain AV19 / DSM 6324 / JCM 9639 / NBRC 100938).